A 576-amino-acid polypeptide reads, in one-letter code: Carboxypeptidase S (576 aa).

At methionine 1–arginine 19 the chain is on the cytoplasmic side. Lysine 8 participates in a covalent cross-link: Glycyl lysine isopeptide (Lys-Gly) (interchain with G-Cter in ubiquitin). Residues alanine 20–leucine 40 form a helical membrane-spanning segment. Residues histidine 41–alanine 576 lie on the Lumenal side of the membrane. A disordered region spans residues proline 44 to lysine 65. N-linked (GlcNAc...) asparagine glycosylation is present at asparagine 88. Zn(2+) is bound at residue histidine 168. Residue aspartate 170 is part of the active site. Asparagine 176 is a glycosylation site (N-linked (GlcNAc...) asparagine). Zn(2+) is bound at residue aspartate 205. The N-linked (GlcNAc...) asparagine glycan is linked to asparagine 228. The active-site Proton acceptor is glutamate 239. Residues glutamate 240 and aspartate 268 each coordinate Zn(2+). 2 N-linked (GlcNAc...) asparagine glycosylation sites follow: asparagine 381 and asparagine 525. Position 547 (histidine 547) interacts with Zn(2+).

This sequence belongs to the peptidase M20A family. As to quaternary structure, yscS is synthesized as one polypeptide chain precursor which after carbohydrate modification in the secretory pathway yields two active precursor molecules. The proteolytically unprocessed forms are associated with the membrane, whereas the mature forms of the enzyme are soluble. Zn(2+) serves as cofactor. Glycosylated. Post-translationally, ubiquitinated. Ubiquitination mediates sorting into internal vesicles in late endosomes. TUL1 is required for ubiquitination.

The protein resides in the vacuole membrane. It carries out the reaction Release of a C-terminal amino acid from a peptide in which glycine is the penultimate amino acid, e.g. Z-Gly-|-Leu.. In terms of biological role, necessary for use of certain peptides as sole nitrogen source. May also cleave intracellularly generated peptides to recycle amino acids for protein synthesis. The sequence is that of Carboxypeptidase S (CPS1) from Saccharomyces cerevisiae (strain ATCC 204508 / S288c) (Baker's yeast).